Here is a 962-residue protein sequence, read N- to C-terminus: UBP9-binding protein bun107 (962 aa).

6 WD repeats span residues 25–69 (DANC…GKAS), 77–116 (AHSA…ASCL), 121–162 (EHTD…EVMR), 172–211 (VVGP…RITD), 214–253 (GHTD…CLFS), and 302–339 (KQDA…NQDV). The segment covering 568 to 578 (SPLRIRSRPSP) has biased composition (low complexity). 2 disordered regions span residues 568–615 (SPLR…QIPS) and 702–758 (RAAS…PREL). Residues 707–723 (RVFSTGTSVTSPQALSK) are compositionally biased toward polar residues. Residue Ser-717 is modified to Phosphoserine. Residues 724–738 (TNNTVNNAANTENNT) show a composition bias toward low complexity.

In terms of assembly, interacts with ubp9 and bun62.

It localises to the cytoplasm. The protein localises to the cell tip. Its function is as follows. Required for the ubp9 recruitment to septa and cell tips but also for its enzymatic activity at these specific locations. The protein is UBP9-binding protein bun107 (bun107) of Schizosaccharomyces pombe (strain 972 / ATCC 24843) (Fission yeast).